Reading from the N-terminus, the 353-residue chain is Uroporphyrinogen decarboxylase (353 aa).

Substrate contacts are provided by residues 26–30 (RQAGR), aspartate 75, tyrosine 161, serine 216, and histidine 332.

Belongs to the uroporphyrinogen decarboxylase family. Homodimer.

It localises to the cytoplasm. The catalysed reaction is uroporphyrinogen III + 4 H(+) = coproporphyrinogen III + 4 CO2. The protein operates within porphyrin-containing compound metabolism; protoporphyrin-IX biosynthesis; coproporphyrinogen-III from 5-aminolevulinate: step 4/4. Its function is as follows. Catalyzes the decarboxylation of four acetate groups of uroporphyrinogen-III to yield coproporphyrinogen-III. This chain is Uroporphyrinogen decarboxylase, found in Gluconacetobacter diazotrophicus (strain ATCC 49037 / DSM 5601 / CCUG 37298 / CIP 103539 / LMG 7603 / PAl5).